Consider the following 343-residue polypeptide: Zinc finger CCCH domain-containing protein 39 (343 aa).

Positions 114–147 (LSHLADAADEAAALRQENAELRVANNDLACRIAK) form a coiled coil. 2 C3H1-type zinc fingers span residues 268-296 (MFKTELCNKWEETGACPYGDQCQFAHGVA) and 306-334 (RYKTQVCRMVLAGGVCPYGHRCHFRHSIT).

The sequence is that of Zinc finger CCCH domain-containing protein 39 from Oryza sativa subsp. japonica (Rice).